Consider the following 664-residue polypeptide: uncharacterized protein (664 aa).

This is an uncharacterized protein from Mycoplasma pneumoniae (strain ATCC 29342 / M129 / Subtype 1) (Mycoplasmoides pneumoniae).